We begin with the raw amino-acid sequence, 74 residues long: Peptide BmKb2 (74 aa).

The N-terminal stretch at 1-22 (MEIKYLLTVFLVLLIVSDHCQA) is a signal peptide. Lys40 carries the lysine amide modification. The propeptide occupies 46 to 74 (DLNGQIDHFKNFRKRDAELEELLSKLPIY).

This sequence belongs to the non-disulfide-bridged peptide (NDBP) superfamily. Short antimicrobial peptide (group 4) family.

The protein resides in the secreted. The protein localises to the target cell membrane. In terms of biological role, antibacterial peptide. This peptide gene is up-regulated at the transcriptional level after the venom gland is challenged by Gram-positive bacteria. The chain is Peptide BmKb2 from Olivierus martensii (Manchurian scorpion).